We begin with the raw amino-acid sequence, 415 residues long: Tyrosine--tRNA ligase (415 aa).

An L-tyrosine-binding site is contributed by Y34. The 'HIGH' region motif lies at P39–H48. The L-tyrosine site is built by Y164 and Q168. Residues K226–S230 carry the 'KMSKS' region motif. K229 is a binding site for ATP. Residues K348 to K415 enclose the S4 RNA-binding domain.

Belongs to the class-I aminoacyl-tRNA synthetase family. TyrS type 1 subfamily. Homodimer.

The protein localises to the cytoplasm. The catalysed reaction is tRNA(Tyr) + L-tyrosine + ATP = L-tyrosyl-tRNA(Tyr) + AMP + diphosphate + H(+). Its function is as follows. Catalyzes the attachment of tyrosine to tRNA(Tyr) in a two-step reaction: tyrosine is first activated by ATP to form Tyr-AMP and then transferred to the acceptor end of tRNA(Tyr). The chain is Tyrosine--tRNA ligase from Leuconostoc mesenteroides subsp. mesenteroides (strain ATCC 8293 / DSM 20343 / BCRC 11652 / CCM 1803 / JCM 6124 / NCDO 523 / NBRC 100496 / NCIMB 8023 / NCTC 12954 / NRRL B-1118 / 37Y).